Consider the following 425-residue polypeptide: Cyclin-K (425 aa).

The segment at 262–425 (GKQPIPQQPP…RRYLDDDRNL (164 aa)) is disordered. Over residues 366 to 377 (AEPAAASELDPA) the composition is skewed to low complexity. Pro residues predominate over residues 379–399 (GPAPPLPHGAPPPLPHRPPPT).

The protein belongs to the cyclin family.

Its subcellular location is the nucleus. Functionally, regulatory subunit of cyclin-dependent kinases that mediates activation of target kinases. Plays a role in transcriptional regulation via its role in regulating the phosphorylation of the C-terminal domain (CTD) of the large subunit of RNA polymerase II (POLR2A). The polypeptide is Cyclin-K (ccnk) (Danio rerio (Zebrafish)).